A 186-amino-acid chain; its full sequence is dCTP deaminase, dUMP-forming (186 aa).

Residues 101–106 (RSSLGR), Asp119, 127–129 (TLE), Gln148, Tyr162, and Gln171 each bind dCTP. Glu129 serves as the catalytic Proton donor/acceptor.

Belongs to the dCTP deaminase family. In terms of assembly, homotrimer.

It carries out the reaction dCTP + 2 H2O = dUMP + NH4(+) + diphosphate. It participates in pyrimidine metabolism; dUMP biosynthesis; dUMP from dCTP: step 1/1. Functionally, bifunctional enzyme that catalyzes both the deamination of dCTP to dUTP and the hydrolysis of dUTP to dUMP without releasing the toxic dUTP intermediate. In Coprothermobacter proteolyticus (strain ATCC 35245 / DSM 5265 / OCM 4 / BT), this protein is dCTP deaminase, dUMP-forming.